The primary structure comprises 199 residues: Large ribosomal subunit protein bL25 (199 aa).

Belongs to the bacterial ribosomal protein bL25 family. CTC subfamily. Part of the 50S ribosomal subunit; part of the 5S rRNA/L5/L18/L25 subcomplex. Contacts the 5S rRNA. Binds to the 5S rRNA independently of L5 and L18.

Its function is as follows. This is one of the proteins that binds to the 5S RNA in the ribosome where it forms part of the central protuberance. The polypeptide is Large ribosomal subunit protein bL25 (Pseudomonas fluorescens (strain ATCC BAA-477 / NRRL B-23932 / Pf-5)).